A 396-amino-acid polypeptide reads, in one-letter code: (S)-8-oxocitronellyl enol synthase ISY2 (396 aa).

NADP(+) contacts are provided by residues 38 to 40 (TGL), 66 to 67 (RR), 84 to 85 (DV), 108 to 109 (TW), Gln146, Tyr182, Ile209, and 216 to 218 (SMM). The active site involves Tyr182.

Belongs to the short-chain dehydrogenases/reductases (SDR) family.

It catalyses the reaction (S)-8-oxocitronellyl enol + NADP(+) = (6E)-8-oxogeranial + NADPH + H(+). The enzyme catalyses (S)-8-oxocitronellyl enol + NAD(+) = (6E)-8-oxogeranial + NADH + H(+). Functionally, iridoid synthase that catalyzes the first step in generation of the iridoid ring scaffold using the linear monoterpene (6E)-8-oxogeranial as substrate. Iridoids comprise a large family of distinctive bicyclic monoterpenes that possess a wide range of pharmacological activities, including anticancer, anti-inflammatory, antifungal and antibacterial activities. Catalyzes the conversion of the linear monoterpene (6E)-8-oxogeranial to (S)-8-oxocitronellyl enol, a precursor of nepetalactones, which are metabolites that are both insect-repellent and have euphoric effect in cats. In Nepeta racemosa (Catmint), this protein is (S)-8-oxocitronellyl enol synthase ISY2.